The chain runs to 728 residues: Catalase-peroxidase (728 aa).

The tryptophyl-tyrosyl-methioninium (Trp-Tyr) (with M-251) cross-link spans 97–225 (WHSAGTYRIA…LAAVMMGLIY (129 aa)). The active-site Proton acceptor is H98. Positions 225–251 (YVNPEGVDGNPDPLRTAQDIRITFARM) form a cross-link, tryptophyl-tyrosyl-methioninium (Tyr-Met) (with W-97). A heme b-binding site is contributed by H266.

The protein belongs to the peroxidase family. Peroxidase/catalase subfamily. As to quaternary structure, homodimer or homotetramer. Heme b serves as cofactor. In terms of processing, formation of the three residue Trp-Tyr-Met cross-link is important for the catalase, but not the peroxidase activity of the enzyme.

It carries out the reaction H2O2 + AH2 = A + 2 H2O. The enzyme catalyses 2 H2O2 = O2 + 2 H2O. Functionally, bifunctional enzyme with both catalase and broad-spectrum peroxidase activity. The protein is Catalase-peroxidase of Shewanella putrefaciens (strain CN-32 / ATCC BAA-453).